We begin with the raw amino-acid sequence, 51 residues long: Protein Tat (51 aa).

Positions 1–25 are enriched in polar residues; it reads EAETATKSCSGRQANQVSLPKQPAS. The segment at 1 to 51 is disordered; it reads EAETATKSCSGRQANQVSLPKQPASQPRGDPTGPKESKKKVETETETDPVN. Lysine 21 is covalently cross-linked (Glycyl lysine isopeptide (Lys-Gly) (interchain with G-Cter in ubiquitin)). Residues 28 to 30 carry the Cell attachment site motif; that stretch reads RGD. Basic and acidic residues predominate over residues 33–43; that stretch reads GPKESKKKVET.

This sequence belongs to the lentiviruses Tat family. In terms of assembly, interacts with host CCNT1. Associates with the P-TEFb complex composed at least of Tat, P-TEFb (CDK9 and CCNT1), TAR RNA, RNA Pol II. Recruits the HATs CREBBP, TAF1/TFIID, EP300, PCAF and GCN5L2. Interacts with host KAT5/Tip60; this interaction targets the latter to degradation. Interacts with the host deacetylase SIRT1. Interacts with host capping enzyme RNGTT; this interaction stimulates RNGTT. Binds to host KDR, and to the host integrins ITGAV/ITGB3 and ITGA5/ITGB1. Interacts with host KPNB1/importin beta-1 without previous binding to KPNA1/importin alpha-1. Interacts with EIF2AK2. Interacts with host nucleosome assembly protein NAP1L1; this interaction may be required for the transport of Tat within the nucleus, since the two proteins interact at the nuclear rim. Interacts with host C1QBP/SF2P32; this interaction involves lysine-acetylated Tat. Interacts with the host chemokine receptors CCR2, CCR3 and CXCR4. Interacts with host DPP4/CD26; this interaction may trigger an anti-proliferative effect. Interacts with host LDLR. Interacts with the host extracellular matrix metalloproteinase MMP1. Interacts with host PRMT6; this interaction mediates Tat's methylation. Interacts with, and is ubiquitinated by MDM2/Hdm2. Interacts with host PSMC3 and HTATIP2. Interacts with STAB1; this interaction may overcome SATB1-mediated repression of IL2 and IL2RA (interleukin) in T cells by binding to the same domain than HDAC1. Interacts (when acetylated) with human CDK13, thereby increasing HIV-1 mRNA splicing and promoting the production of the doubly spliced HIV-1 protein Nef. Acetylation by EP300, CREBBP, GCN5L2/GCN5 and PCAF regulates the transactivation activity of Tat. Post-translationally, phosphorylated by EIF2AK2 on serine and threonine residues adjacent to the basic region important for TAR RNA binding and function. Phosphorylation of Tat by EIF2AK2 is dependent on the prior activation of EIF2AK2 by dsRNA. In terms of processing, asymmetrical arginine methylation by host PRMT6 seems to diminish the transactivation capacity of Tat and affects the interaction with host CCNT1. Polyubiquitination by MDM2 does not target Tat to degradation, but activates its transactivation function and fosters interaction with CCNT1 and TAR RNA.

The protein localises to the host nucleus. It is found in the host nucleolus. Its subcellular location is the host cytoplasm. It localises to the secreted. Functionally, transcriptional activator that increases RNA Pol II processivity, thereby increasing the level of full-length viral transcripts. Recognizes a hairpin structure at the 5'-LTR of the nascent viral mRNAs referred to as the transactivation responsive RNA element (TAR) and recruits the cyclin T1-CDK9 complex (P-TEFb complex) that will in turn hyperphosphorylate the RNA polymerase II to allow efficient elongation. The CDK9 component of P-TEFb and other Tat-activated kinases hyperphosphorylate the C-terminus of RNA Pol II that becomes stabilized and much more processive. Other factors such as HTATSF1/Tat-SF1, SUPT5H/SPT5, and HTATIP2 are also important for Tat's function. Besides its effect on RNA Pol II processivity, Tat induces chromatin remodeling of proviral genes by recruiting the histone acetyltransferases (HATs) CREBBP, EP300 and PCAF to the chromatin. This also contributes to the increase in proviral transcription rate, especially when the provirus integrates in transcriptionally silent region of the host genome. To ensure maximal activation of the LTR, Tat mediates nuclear translocation of NF-kappa-B by interacting with host RELA. Through its interaction with host TBP, Tat may also modulate transcription initiation. Tat can reactivate a latently infected cell by penetrating in it and transactivating its LTR promoter. In the cytoplasm, Tat is thought to act as a translational activator of HIV-1 mRNAs. Extracellular circulating Tat can be endocytosed by surrounding uninfected cells via the binding to several surface receptors such as CD26, CXCR4, heparan sulfate proteoglycans (HSPG) or LDLR. Neurons are rarely infected, but they internalize Tat via their LDLR. Endosomal low pH allows Tat to cross the endosome membrane to enter the cytosol and eventually further translocate into the nucleus, thereby inducing severe cell dysfunctions ranging from cell activation to cell death. Through its interaction with nuclear HATs, Tat is potentially able to control the acetylation-dependent cellular gene expression. Tat seems to inhibit the HAT activity of KAT5/Tip60 and TAF1, and consequently modify the expression of specific cellular genes. Modulates the expression of many cellular genes involved in cell survival, proliferation or in coding for cytokines (such as IL10) or cytokine receptors. May be involved in the derepression of host interleukin IL2 expression. Mediates the activation of cyclin-dependent kinases and dysregulation of microtubule network. Tat plays a role in T-cell and neurons apoptosis. Tat induced neurotoxicity and apoptosis probably contribute to neuroAIDS. Host extracellular matrix metalloproteinase MMP1 cleaves Tat and decreases Tat's mediated neurotoxicity. Circulating Tat also acts as a chemokine-like and/or growth factor-like molecule that binds to specific receptors on the surface of the cells, affecting many cellular pathways. In the vascular system, Tat binds to ITGAV/ITGB3 and ITGA5/ITGB1 integrins dimers at the surface of endothelial cells and competes with bFGF for heparin-binding sites, leading to an excess of soluble bFGF. Binds to KDR/VEGFR-2. All these Tat-mediated effects enhance angiogenesis in Kaposi's sarcoma lesions. The sequence is that of Protein Tat from Homo sapiens (Human).